The chain runs to 255 residues: U2 small nuclear ribonucleoprotein A' (255 aa).

LRR repeat units follow at residues 20 to 41 (RDRE…GATL), 43 to 64 (QFDA…PLLR), 65 to 86 (RLKT…LDQA), and 89 to 110 (CLTE…DPLA). In terms of domain architecture, LRRCT spans 123–161 (NPVTNKKHYRLYVIYKVPQVRVLDFQKVKLKERQEAEKM). Lys172 bears the N6-acetyllysine; alternate mark. Lys172 participates in a covalent cross-link: Glycyl lysine isopeptide (Lys-Gly) (interchain with G-Cter in SUMO2); alternate. Residues Ser178 and Ser197 each carry the phosphoserine modification. A disordered region spans residues 179–199 (KTFNPGAGLPTDKKKGGPSAG). A Glycyl lysine isopeptide (Lys-Gly) (interchain with G-Cter in SUMO2) cross-link involves residue Lys221. Residues 222–255 (GLLQSGQIPGRERRSGPSDEGEEEIEDDTVTNGS) are disordered. 2 positions are modified to phosphoserine: Ser236 and Ser255. Positions 240–255 (DEGEEEIEDDTVTNGS) are enriched in acidic residues.

It belongs to the U2 small nuclear ribonucleoprotein A family. Identified in the spliceosome B complex. Identified in the spliceosome C complex. Found in a pre-mRNA splicing complex with SFRS4, SFRS5, SNRNP70, SNRPA1, SRRM1 and SRRM2. Found in a pre-mRNA exonic splicing enhancer (ESE) complex with SNRNP70, SNRPA1, SRRM1 and TRA2B. Contributes to the binding of stem loop IV of U2 snRNA with SNRPB2.

It localises to the nucleus. Functionally, involved in pre-mRNA splicing as component of the spliceosome. Associated with sn-RNP U2, where it contributes to the binding of stem loop IV of U2 snRNA. The chain is U2 small nuclear ribonucleoprotein A' (Snrpa1) from Mus musculus (Mouse).